Reading from the N-terminus, the 415-residue chain is Serine hydroxymethyltransferase (415 aa).

Over residues 1–10 (MERSHIRDVD) the composition is skewed to basic and acidic residues. A disordered region spans residues 1-21 (MERSHIRDVDPDAADALSSER). Residues L119 and 123-125 (GHL) contribute to the (6S)-5,6,7,8-tetrahydrofolate site. K228 carries the N6-(pyridoxal phosphate)lysine modification. 353 to 355 (SAF) lines the (6S)-5,6,7,8-tetrahydrofolate pocket.

This sequence belongs to the SHMT family. Homodimer. Requires pyridoxal 5'-phosphate as cofactor.

Its subcellular location is the cytoplasm. It catalyses the reaction (6R)-5,10-methylene-5,6,7,8-tetrahydrofolate + glycine + H2O = (6S)-5,6,7,8-tetrahydrofolate + L-serine. It participates in one-carbon metabolism; tetrahydrofolate interconversion. The protein operates within amino-acid biosynthesis; glycine biosynthesis; glycine from L-serine: step 1/1. Catalyzes the reversible interconversion of serine and glycine with tetrahydrofolate (THF) serving as the one-carbon carrier. Also exhibits THF-independent aldolase activity toward beta-hydroxyamino acids, producing glycine and aldehydes, via a retro-aldol mechanism. The chain is Serine hydroxymethyltransferase from Haloquadratum walsbyi (strain DSM 16790 / HBSQ001).